The sequence spans 87 residues: Putative defensin-like protein 169 (87 aa).

An N-terminal signal peptide occupies residues 1-21 (MKKTFSFTVLILFVIPLLVTG). 4 disulfide bridges follow: cysteine 36-cysteine 86, cysteine 48-cysteine 74, cysteine 53-cysteine 80, and cysteine 57-cysteine 82.

It belongs to the DEFL family.

The protein resides in the secreted. The protein is Putative defensin-like protein 169 of Arabidopsis thaliana (Mouse-ear cress).